A 466-amino-acid chain; its full sequence is Argininosuccinate lyase (466 aa).

Belongs to the lyase 1 family. Argininosuccinate lyase subfamily.

It localises to the cytoplasm. It carries out the reaction 2-(N(omega)-L-arginino)succinate = fumarate + L-arginine. Its pathway is amino-acid biosynthesis; L-arginine biosynthesis; L-arginine from L-ornithine and carbamoyl phosphate: step 3/3. This Desulfovibrio desulfuricans (strain ATCC 27774 / DSM 6949 / MB) protein is Argininosuccinate lyase.